A 211-amino-acid polypeptide reads, in one-letter code: 3-demethoxyubiquinol 3-hydroxylase (211 aa).

Positions 60, 90, 93, 142, 174, and 177 each coordinate Fe cation.

This sequence belongs to the COQ7 family. Fe cation serves as cofactor.

It localises to the cell membrane. It carries out the reaction a 5-methoxy-2-methyl-3-(all-trans-polyprenyl)benzene-1,4-diol + AH2 + O2 = a 3-demethylubiquinol + A + H2O. It functions in the pathway cofactor biosynthesis; ubiquinone biosynthesis. In terms of biological role, catalyzes the hydroxylation of 2-nonaprenyl-3-methyl-6-methoxy-1,4-benzoquinol during ubiquinone biosynthesis. The polypeptide is 3-demethoxyubiquinol 3-hydroxylase (Francisella tularensis subsp. novicida (strain U112)).